The following is a 178-amino-acid chain: SCAN domain-containing protein 1 (178 aa).

Residues 1 to 107 (MAATEQSLAP…GSRPGPETFR (107 aa)) are disordered. Residues 9–18 (APAGSSAPPS) show a composition bias toward low complexity. Residues 36 to 54 (GSSSTPEAPSIPDSSNPSA) are compositionally biased toward polar residues. The SCAN box domain occupies 107 to 178 (RQRFRQFRYQ…RRRTDVRITG (72 aa)).

In terms of assembly, interacts with ZNF202.

Its subcellular location is the nucleus. Functionally, may regulate transcriptional activity. The sequence is that of SCAN domain-containing protein 1 (SCAND1) from Bos taurus (Bovine).